We begin with the raw amino-acid sequence, 371 residues long: Chorismate synthase (371 aa).

NADP(+)-binding residues include R48 and R54. FMN-binding positions include 125-127 (RSS), 238-239 (NA), G278, 293-297 (KPTSS), and R319.

It belongs to the chorismate synthase family. In terms of assembly, homotetramer. FMNH2 serves as cofactor.

The catalysed reaction is 5-O-(1-carboxyvinyl)-3-phosphoshikimate = chorismate + phosphate. Its pathway is metabolic intermediate biosynthesis; chorismate biosynthesis; chorismate from D-erythrose 4-phosphate and phosphoenolpyruvate: step 7/7. Functionally, catalyzes the anti-1,4-elimination of the C-3 phosphate and the C-6 proR hydrogen from 5-enolpyruvylshikimate-3-phosphate (EPSP) to yield chorismate, which is the branch point compound that serves as the starting substrate for the three terminal pathways of aromatic amino acid biosynthesis. This reaction introduces a second double bond into the aromatic ring system. The chain is Chorismate synthase from Saccharophagus degradans (strain 2-40 / ATCC 43961 / DSM 17024).